The sequence spans 558 residues: 2-isopropylmalate synthase (558 aa).

The region spanning 30–303 (PIWCSVDLRD…DPGIDCSDIN (274 aa)) is the Pyruvate carboxyltransferase domain. Asp-39, His-242, His-244, and Asn-278 together coordinate Mg(2+). The segment at 437–558 (QPGARLKFLD…ANRIVGRKAR (122 aa)) is regulatory domain.

This sequence belongs to the alpha-IPM synthase/homocitrate synthase family. LeuA type 2 subfamily. In terms of assembly, homodimer. Requires Mg(2+) as cofactor.

The protein localises to the cytoplasm. It carries out the reaction 3-methyl-2-oxobutanoate + acetyl-CoA + H2O = (2S)-2-isopropylmalate + CoA + H(+). Its pathway is amino-acid biosynthesis; L-leucine biosynthesis; L-leucine from 3-methyl-2-oxobutanoate: step 1/4. Catalyzes the condensation of the acetyl group of acetyl-CoA with 3-methyl-2-oxobutanoate (2-ketoisovalerate) to form 3-carboxy-3-hydroxy-4-methylpentanoate (2-isopropylmalate). The sequence is that of 2-isopropylmalate synthase from Mesorhizobium japonicum (strain LMG 29417 / CECT 9101 / MAFF 303099) (Mesorhizobium loti (strain MAFF 303099)).